Reading from the N-terminus, the 794-residue chain is uncharacterized protein (794 aa).

The first 22 residues, 1–22 (MKFKYGAIVFSGLLGVSAILAA), serve as a signal peptide directing secretion. The N-palmitoyl cysteine moiety is linked to residue cysteine 23. Cysteine 23 carries the S-diacylglycerol cysteine lipid modification. 2 stretches are compositionally biased toward polar residues: residues 182–200 (TSVQ…NNGV) and 245–261 (QMST…DANQ). 5 disordered regions span residues 182–208 (TSVQ…KIDK), 222–261 (NKAK…DANQ), 474–529 (FKIK…GKNG), 566–594 (SAAK…TEQK), and 737–757 (KNEK…RGKQ). Residues 475-501 (KIKSSNKSKSSSSKSSTKAETGKTSGG) show a composition bias toward low complexity. A compositionally biased stretch (polar residues) spans 511–526 (GAQNQGKKGEGAQNQG). The segment covering 567-576 (AAKKEDKKSG) has biased composition (basic and acidic residues). The segment covering 577-593 (ESTTEQTQIQSKSVTEQ) has biased composition (polar residues). Positions 737-751 (KNEKKEGSDQKDSKS) are enriched in basic and acidic residues.

Belongs to the MG185/MG260 family.

It is found in the cell membrane. This is an uncharacterized protein from Mycoplasma pneumoniae (strain ATCC 29342 / M129 / Subtype 1) (Mycoplasmoides pneumoniae).